The following is a 360-amino-acid chain: Histidinol-phosphate aminotransferase (360 aa).

Residue Lys222 is modified to N6-(pyridoxal phosphate)lysine.

It belongs to the class-II pyridoxal-phosphate-dependent aminotransferase family. Histidinol-phosphate aminotransferase subfamily. As to quaternary structure, homodimer. The cofactor is pyridoxal 5'-phosphate.

It carries out the reaction L-histidinol phosphate + 2-oxoglutarate = 3-(imidazol-4-yl)-2-oxopropyl phosphate + L-glutamate. It participates in amino-acid biosynthesis; L-histidine biosynthesis; L-histidine from 5-phospho-alpha-D-ribose 1-diphosphate: step 7/9. In Listeria monocytogenes serotype 4b (strain CLIP80459), this protein is Histidinol-phosphate aminotransferase.